We begin with the raw amino-acid sequence, 308 residues long: Cytochrome b (308 aa).

4 helical membrane passes run 1–21 (FGSLLGICLLTQIITGLLLAT), 45–66 (WLIRNLQANGASFFFICIYLHI), 81–101 (WNTGVILLLTLMATAFVGYVL), and 146–166 (FFALHFLLPFLIAGLTLIHFT). Residue His-65 participates in heme b binding. The heme b site is built by His-150 and His-164. His-169 contacts a ubiquinone. Transmembrane regions (helical) follow at residues 194–214 (VKDILGFMFMLLPLTTLALFS), 256–276 (LGGVLALAASVLVLFLAPFLH), and 288–308 (LSQFLFWMLVANLLILTWVGS).

This sequence belongs to the cytochrome b family. In terms of assembly, the cytochrome bc1 complex contains 11 subunits: 3 respiratory subunits (MT-CYB, CYC1 and UQCRFS1), 2 core proteins (UQCRC1 and UQCRC2) and 6 low-molecular weight proteins (UQCRH/QCR6, UQCRB/QCR7, UQCRQ/QCR8, UQCR10/QCR9, UQCR11/QCR10 and a cleavage product of UQCRFS1). This cytochrome bc1 complex then forms a dimer. Requires heme b as cofactor.

It localises to the mitochondrion inner membrane. Its function is as follows. Component of the ubiquinol-cytochrome c reductase complex (complex III or cytochrome b-c1 complex) that is part of the mitochondrial respiratory chain. The b-c1 complex mediates electron transfer from ubiquinol to cytochrome c. Contributes to the generation of a proton gradient across the mitochondrial membrane that is then used for ATP synthesis. The sequence is that of Cytochrome b (MT-CYB) from Colaptes rupicola (Southern Andean flicker).